A 422-amino-acid chain; its full sequence is Probable biofilm formation methyltransferase WspC (422 aa).

The CheR-type methyltransferase domain maps to 1–264 (MNDRFERLLK…LSFVFRRTSE (264 aa)). Residues Thr-67, Arg-71, Glu-108, Asp-132, 186–187 (NL), and 205–206 (RN) contribute to the S-adenosyl-L-methionine site. Residues 289–316 (ASIRPSPPPPAKPRQRLSSLVPPASGQP) form a disordered region. One copy of the TPR repeat lies at 354 to 387 (ATVFYWLGLLSDVAGQEQEAQDFYRKALYLEPQH).

As to quaternary structure, monomer.

Functionally, involved in biofilm formation. The chain is Probable biofilm formation methyltransferase WspC (wspC) from Pseudomonas aeruginosa (strain ATCC 15692 / DSM 22644 / CIP 104116 / JCM 14847 / LMG 12228 / 1C / PRS 101 / PAO1).